The chain runs to 201 residues: Thymidylate kinase (201 aa).

7 to 14 is a binding site for ATP; that stretch reads GGEGSGKT.

Belongs to the thymidylate kinase family.

It carries out the reaction dTMP + ATP = dTDP + ADP. Its function is as follows. Phosphorylation of dTMP to form dTDP in both de novo and salvage pathways of dTTP synthesis. The chain is Thymidylate kinase from Acholeplasma laidlawii (strain PG-8A).